The sequence spans 241 residues: Uridylate kinase (241 aa).

An ATP-binding site is contributed by 12–15 (KLSG). UMP is bound at residue glycine 54. 2 residues coordinate ATP: glycine 55 and arginine 59. Residues aspartate 74 and 135 to 142 (TGNPFFTT) each bind UMP. ATP contacts are provided by threonine 162, tyrosine 168, and aspartate 171.

It belongs to the UMP kinase family. Homohexamer.

The protein localises to the cytoplasm. The enzyme catalyses UMP + ATP = UDP + ADP. The protein operates within pyrimidine metabolism; CTP biosynthesis via de novo pathway; UDP from UMP (UMPK route): step 1/1. With respect to regulation, inhibited by UTP. Its function is as follows. Catalyzes the reversible phosphorylation of UMP to UDP. This chain is Uridylate kinase, found in Magnetococcus marinus (strain ATCC BAA-1437 / JCM 17883 / MC-1).